A 1171-amino-acid polypeptide reads, in one-letter code: ATP-dependent helicase/deoxyribonuclease subunit B (1171 aa).

The UvrD-like helicase ATP-binding domain occupies 1–343; that stretch reads MSLRFVIGRA…LVAEENYRYR (343 aa). Position 8 to 15 (8 to 15) interacts with ATP; the sequence is GRAGSGKS. The UvrD-like helicase C-terminal domain maps to 281 to 587; that stretch reads MEQPRFHSPA…QFANIPPSLD (307 aa). 4 residues coordinate [4Fe-4S] cluster: cysteine 805, cysteine 1129, cysteine 1132, and cysteine 1138.

It belongs to the helicase family. AddB/RexB type 1 subfamily. In terms of assembly, heterodimer of AddA and AddB. Requires Mg(2+) as cofactor. [4Fe-4S] cluster serves as cofactor.

Its function is as follows. The heterodimer acts as both an ATP-dependent DNA helicase and an ATP-dependent, dual-direction single-stranded exonuclease. Recognizes the chi site generating a DNA molecule suitable for the initiation of homologous recombination. The AddB subunit has 5' -&gt; 3' nuclease activity but not helicase activity. This is ATP-dependent helicase/deoxyribonuclease subunit B from Bacillus anthracis.